A 34-amino-acid chain; its full sequence is Toxin GTx1-15 (34 aa).

3 disulfide bridges follow: Cys2–Cys17, Cys9–Cys23, and Cys16–Cys30. Phe34 carries the phenylalanine amide modification.

Belongs to the neurotoxin 10 (Hwtx-1) family. 08 (Gtx1-15) subfamily. Expressed by the venom gland.

The protein resides in the secreted. Potent voltage-gated sodium channel blocker. Potently inhibits the voltage-gated sodium channels Nav1.7/SCN9A (IC(50)=0.58-10 nM). Also shows a moderate activity on Nav1.1/SCN1A (IC(50)=6 nM), Nav1.2/SCN2A (IC(50)=5-128 nM), Nav1.3/SCN3A (IC(50)=20.3-170 nM), and Nav1.6/SCN8A (IC(50)=17-20.1 nM). Shows an unclear inhibition of Nav1.4/SCN4A (IC(50)=200 nM to &gt;10 uM), Nav1.5/SCN5A (IC(50)=140 nM to &gt;10 uM) and Nav1.8/SCN10A (IC(50)=68-12200 nM). Weakly blocks the low voltage-gated calcium channels Cav3.1/CACNA1G (30% inhibition of the peak current at 9.8 nM). shows moderate affinity for lipid bilayers. In vivo, when tested on the OD1-induced mouse model of Nav1.7/SCN9A-mediated pain, the toxin is effective when co-administered with OD1, but lacks efficacy when delivered systemically. This Grammostola porteri (Tarantula spider) protein is Toxin GTx1-15.